Reading from the N-terminus, the 261-residue chain is Succinate dehydrogenase iron-sulfur subunit (261 aa).

The 2Fe-2S ferredoxin-type domain occupies 28-119; the sequence is RKVQVYRYDP…DIKIYPLPHM (92 aa). Residues Cys80, Cys85, and Cys100 each coordinate [2Fe-2S] cluster. The 31-residue stretch at 161-191 folds into the 4Fe-4S ferredoxin-type domain; the sequence is DREKLDGLYECILCACCSTSCPSYWWNSDKY. Cys171, Cys174, and Cys177 together coordinate [4Fe-4S] cluster. A [3Fe-4S] cluster-binding site is contributed by Cys181. Residue Trp186 coordinates a ubiquinone. 2 residues coordinate [3Fe-4S] cluster: Cys228 and Cys234. Position 238 (Cys238) interacts with [4Fe-4S] cluster.

The protein belongs to the succinate dehydrogenase/fumarate reductase iron-sulfur protein family. Part of an enzyme complex containing four subunits: a flavoprotein, an iron-sulfur, cytochrome b-556, and a hydrophobic anchor protein. [2Fe-2S] cluster is required as a cofactor. The cofactor is [3Fe-4S] cluster. Requires [4Fe-4S] cluster as cofactor.

The enzyme catalyses a quinone + succinate = fumarate + a quinol. It functions in the pathway carbohydrate metabolism; tricarboxylic acid cycle; fumarate from succinate (bacterial route): step 1/1. The chain is Succinate dehydrogenase iron-sulfur subunit (sdhB) from Rickettsia typhi (strain ATCC VR-144 / Wilmington).